Here is a 285-residue protein sequence, read N- to C-terminus: Ribose-phosphate pyrophosphokinase (285 aa).

ATP is bound by residues 33–35 (DGE) and 91–92 (RQ). Mg(2+) is bound by residues His-125 and Asp-162. Residue Lys-185 is part of the active site. D-ribose 5-phosphate contacts are provided by residues Arg-187, Asp-211, and 215 to 219 (STGGT).

This sequence belongs to the ribose-phosphate pyrophosphokinase family. Class III (archaeal) subfamily. It depends on Mg(2+) as a cofactor.

The protein localises to the cytoplasm. The catalysed reaction is D-ribose 5-phosphate + ATP = 5-phospho-alpha-D-ribose 1-diphosphate + AMP + H(+). Its pathway is metabolic intermediate biosynthesis; 5-phospho-alpha-D-ribose 1-diphosphate biosynthesis; 5-phospho-alpha-D-ribose 1-diphosphate from D-ribose 5-phosphate (route I): step 1/1. Its function is as follows. Involved in the biosynthesis of the central metabolite phospho-alpha-D-ribosyl-1-pyrophosphate (PRPP) via the transfer of pyrophosphoryl group from ATP to 1-hydroxyl of ribose-5-phosphate (Rib-5-P). This Methanothermobacter thermautotrophicus (strain ATCC 29096 / DSM 1053 / JCM 10044 / NBRC 100330 / Delta H) (Methanobacterium thermoautotrophicum) protein is Ribose-phosphate pyrophosphokinase.